A 263-amino-acid polypeptide reads, in one-letter code: Polyglutamine-binding protein 1 (263 aa).

The region spanning 46–80 (EGLPPSWYKVFDPSCGLPYYWNVETDLVSWLSPHD) is the WW domain. Residues 94 to 263 (NNNADAEDKS…AEASRTKQQD (170 aa)) are disordered. Over residues 99–173 (AEDKSDRNLE…DKADREEGKD (75 aa)) the composition is skewed to basic and acidic residues. A 1-1; approximate repeat occupies 104-110 (DRNLEKV). The 5 X 7 AA approximate tandem repeats of D-R-[NS]-H-E-K-S stretch occupies residues 104 to 138 (DRNLEKVDRNHEKSDRSHEKPDRSHEKADRNHEKN). A 1-2 repeat occupies 111 to 117 (DRNHEKS). Residues 118–124 (DRSHEKP) form a 1-3; approximate repeat. One copy of the 1-4; approximate repeat lies at 125–131 (DRSHEKA). The 1-5; approximate repeat unit spans residues 132–138 (DRNHEKN). 9 consecutive repeat copies span residues 139–140 (DR), 141–142 (ER), 143–144 (ER), 150–151 (DR), 152–153 (ER), 154–155 (DR), 156–157 (DR), 158–159 (ER), and 160–161 (ER). Residues 139–144 (DRERER) form a 3 X 2 AA tandem repeats of [DE]-R region. A 6 X 2 AA tandem repeats of [DE]-R region spans residues 150–161 (DRERDRDRERER). An important for interaction with TXNL4A region spans residues 243–253 (YPSPGAVLRAN). Phosphoserine is present on S245.

In terms of assembly, interacts with POU3F2/Brn-2, ATXN1, TXNL4A, HTT and AR. Interaction with ATXN1 correlates positively with the length of the polyglutamine tract. Interacts with RNA polymerase II large subunit in a phosphorylation-dependent manner. Forms a ternary complex with ATXN1 mutant and phosphorylated RNA polymerase II. Interacts (via C-terminus) with TXNL4A and CD2BP2. Interacts (via WW domain) with ATN1 and SF3B1, and may interact with additional splice factors. Interacts (via WW domain) with WBP11; Leading to reduce interaction between PQBP1 and TXNL4A. Interacts with CAPRIN1. Interacts with DDX1. Interacts with SFPQ. Interacts with KHSRP. As to expression, detected in brain cortex and hippocampus neurons (at protein level). Expressed in brain with high level in cerebellar cortex, hippocampus and olfactory bulb.

It localises to the nucleus. Its subcellular location is the nucleus speckle. It is found in the cytoplasmic granule. In terms of biological role, intrinsically disordered protein that acts as a scaffold, and which is involved in different processes, such as pre-mRNA splicing, transcription regulation, innate immunity and neuron development. Interacts with splicing-related factors via the intrinsically disordered region and regulates alternative splicing of target pre-mRNA species. May suppress the ability of POU3F2 to transactivate the DRD1 gene in a POU3F2 dependent manner. Can activate transcription directly or via association with the transcription machinery. May be involved in ATXN1 mutant-induced cell death. The interaction with ATXN1 mutant reduces levels of phosphorylated RNA polymerase II large subunit. Involved in the assembly of cytoplasmic stress granule, possibly by participating in the transport of neuronal RNA granules. Also acts as an innate immune sensor of infection by retroviruses, by detecting the presence of reverse-transcribed DNA in the cytosol. Directly binds retroviral reverse-transcribed DNA in the cytosol and interacts with CGAS, leading to activate the cGAS-STING signaling pathway, triggering type-I interferon production. This Mus musculus (Mouse) protein is Polyglutamine-binding protein 1 (Pqbp1).